Here is a 614-residue protein sequence, read N- to C-terminus: Translation initiation factor IF-2 (614 aa).

A tr-type G domain is found at 115-283 (ARAPIVTIMG…ILLIAELNDY (169 aa)). The segment at 124–131 (GHVDHGKT) is G1. Residue 124–131 (GHVDHGKT) coordinates GTP. Residues 149–153 (GITQH) form a G2 region. The tract at residues 170 to 173 (DTPG) is G3. Residues 170–174 (DTPGH) and 224–227 (NKMD) each bind GTP. Residues 224–227 (NKMD) are G4. Residues 260–262 (SAL) form a G5 region.

The protein belongs to the TRAFAC class translation factor GTPase superfamily. Classic translation factor GTPase family. IF-2 subfamily.

It localises to the cytoplasm. In terms of biological role, one of the essential components for the initiation of protein synthesis. Protects formylmethionyl-tRNA from spontaneous hydrolysis and promotes its binding to the 30S ribosomal subunits. Also involved in the hydrolysis of GTP during the formation of the 70S ribosomal complex. The chain is Translation initiation factor IF-2 from Ureaplasma urealyticum serovar 10 (strain ATCC 33699 / Western).